The primary structure comprises 123 residues: Ribosome-binding factor A (123 aa).

The protein belongs to the RbfA family. Monomer. Binds 30S ribosomal subunits, but not 50S ribosomal subunits or 70S ribosomes.

It localises to the cytoplasm. One of several proteins that assist in the late maturation steps of the functional core of the 30S ribosomal subunit. Associates with free 30S ribosomal subunits (but not with 30S subunits that are part of 70S ribosomes or polysomes). Required for efficient processing of 16S rRNA. May interact with the 5'-terminal helix region of 16S rRNA. This Ralstonia nicotianae (strain ATCC BAA-1114 / GMI1000) (Ralstonia solanacearum) protein is Ribosome-binding factor A.